The following is a 130-amino-acid chain: Small ribosomal subunit protein uS8 (130 aa).

This sequence belongs to the universal ribosomal protein uS8 family. Part of the 30S ribosomal subunit. Contacts proteins S5 and S12.

Its function is as follows. One of the primary rRNA binding proteins, it binds directly to 16S rRNA central domain where it helps coordinate assembly of the platform of the 30S subunit. This Buchnera aphidicola subsp. Cinara cedri (strain Cc) protein is Small ribosomal subunit protein uS8.